The sequence spans 224 residues: MKVKTKSKKVNKAWLNDHINDPYVKLAQKEGYRARAAYKLKEIDEALGLIKPGQVVVDLGAAPGAWSQYLRRRFAPKEAGTGGAAAGALNGRIIALDLLDFEPIEGVQFIQGDFHDEAVLAELSAAIGGRGVDVVVSDMAPNLSGIASSDSARIALLVELAVEFAETHLHPHGALVCKVFHGSGHSQLVELFKKRFRVVKPIKPKASRDKSSETFLVGIGLKSR.

Positions 64, 66, 97, 113, and 138 each coordinate S-adenosyl-L-methionine. Catalysis depends on K178, which acts as the Proton acceptor.

Belongs to the class I-like SAM-binding methyltransferase superfamily. RNA methyltransferase RlmE family.

It is found in the cytoplasm. It carries out the reaction uridine(2552) in 23S rRNA + S-adenosyl-L-methionine = 2'-O-methyluridine(2552) in 23S rRNA + S-adenosyl-L-homocysteine + H(+). Functionally, specifically methylates the uridine in position 2552 of 23S rRNA at the 2'-O position of the ribose in the fully assembled 50S ribosomal subunit. The chain is Ribosomal RNA large subunit methyltransferase E from Methylibium petroleiphilum (strain ATCC BAA-1232 / LMG 22953 / PM1).